A 577-amino-acid chain; its full sequence is Proline--tRNA ligase (577 aa).

This sequence belongs to the class-II aminoacyl-tRNA synthetase family. ProS type 1 subfamily. In terms of assembly, homodimer.

It localises to the cytoplasm. The enzyme catalyses tRNA(Pro) + L-proline + ATP = L-prolyl-tRNA(Pro) + AMP + diphosphate. Its function is as follows. Catalyzes the attachment of proline to tRNA(Pro) in a two-step reaction: proline is first activated by ATP to form Pro-AMP and then transferred to the acceptor end of tRNA(Pro). As ProRS can inadvertently accommodate and process non-cognate amino acids such as alanine and cysteine, to avoid such errors it has two additional distinct editing activities against alanine. One activity is designated as 'pretransfer' editing and involves the tRNA(Pro)-independent hydrolysis of activated Ala-AMP. The other activity is designated 'posttransfer' editing and involves deacylation of mischarged Ala-tRNA(Pro). The misacylated Cys-tRNA(Pro) is not edited by ProRS. The polypeptide is Proline--tRNA ligase (Thermotoga neapolitana (strain ATCC 49049 / DSM 4359 / NBRC 107923 / NS-E)).